Reading from the N-terminus, the 580-residue chain is Glutathione hydrolase proenzyme (580 aa).

Positions 1–25 (MIKPTFLRRVAIAALLSGSCFSAAA) are cleaved as a signal peptide. Arginine 114 provides a ligand contact to L-glutamate. Threonine 391 functions as the Nucleophile in the catalytic mechanism. L-glutamate contacts are provided by residues threonine 409, asparagine 411, glutamine 430, aspartate 433, 462 to 463 (SS), and 483 to 484 (GG). The disordered stretch occupies residues 561–580 (DGELYGASDPRSVDDLTAGY).

Belongs to the gamma-glutamyltransferase family. This enzyme consists of two polypeptide chains, which are synthesized in precursor form from a single polypeptide. Post-translationally, cleaved by autocatalysis into a large and a small subunit.

It localises to the periplasm. The enzyme catalyses an N-terminal (5-L-glutamyl)-[peptide] + an alpha-amino acid = 5-L-glutamyl amino acid + an N-terminal L-alpha-aminoacyl-[peptide]. The catalysed reaction is glutathione + H2O = L-cysteinylglycine + L-glutamate. It catalyses the reaction an S-substituted glutathione + H2O = an S-substituted L-cysteinylglycine + L-glutamate. Its pathway is sulfur metabolism; glutathione metabolism. Transferase and hydrolase activities are inhibited by L-Ala and L-Gln, and also by GGT affinity labeling reagents such as azaserine and 6-diazo-5-oxo-nor-leucine. In terms of biological role, cleaves the gamma-glutamyl bond of periplasmic glutathione (gamma-Glu-Cys-Gly), glutathione conjugates, and other gamma-glutamyl compounds. The metabolism of glutathione releases free glutamate and the dipeptide cysteinyl-glycine, which is hydrolyzed to cysteine and glycine by dipeptidases; it may function in amino acid uptake/salvage, or possibly in peptidoglycan linkage. Catalyzes the hydrolysis and transpeptidation of many gamma-glutamyl compounds (including some D-gamma-glutamyl substrates), with a preference for basic and aromatic amino acids as acceptors. The KM values for gamma-glutamyl acceptors are so high that it has been proposed transpeptidation is not the physiological role in E.coli. The sequence is that of Glutathione hydrolase proenzyme (ggt) from Escherichia coli (strain K12).